Here is a 407-residue protein sequence, read N- to C-terminus: [Pyruvate dehydrogenase (acetyl-transferring)] kinase isozyme 2, mitochondrial (407 aa).

Positions 135 to 364 (LEYKDTYGDD…DAVIYLKALS (230 aa)) constitute a Histidine kinase domain. 2 positions are modified to phosphotyrosine: Tyr215 and Tyr216. Residues 251 to 258 (ELFKNAMR), Asp290, 309 to 310 (ST), and 325 to 330 (GFGYGL) contribute to the ATP site. Position 376 is an N6-succinyllysine (Lys376).

This sequence belongs to the PDK/BCKDK protein kinase family. In terms of assembly, homodimer, and heterodimer with PDK1. Interacts with the pyruvate dehydrogenase complex subunit DLAT, and is part of the multimeric pyruvate dehydrogenase complex that contains multiple copies of pyruvate dehydrogenase (E1), dihydrolipoamide acetyltransferase (DLAT, E2) and lipoamide dehydrogenase (DLD, E3). Detected in heart (at protein level). Highest level of expression in heart and skeletal muscle and the lowest in spleen and lung. Liver, kidney, brain and testis levels are intermediate.

Its subcellular location is the mitochondrion matrix. The catalysed reaction is L-seryl-[pyruvate dehydrogenase E1 alpha subunit] + ATP = O-phospho-L-seryl-[pyruvate dehydrogenase E1 alpha subunit] + ADP + H(+). Activity increases in response to increased acetyl-CoA and NADH levels and upon binding to the pyruvate dehydrogenase subunit DLAT. Inhibited by ADP and pyruvate; these compounds interfere with DLAT binding and thereby inhibit kinase activity. Inhibited by dichloroacetate. Inhibited by AZD7545; this compound interferes with DLAT binding and thereby inhibits kinase activity. Reactive oxygen species cause the formation of disulfide bonds, and thereby inhibit the enzyme. Its function is as follows. Kinase that plays a key role in the regulation of glucose and fatty acid metabolism and homeostasis via phosphorylation of the pyruvate dehydrogenase subunits PDHA1 and PDHA2. This inhibits pyruvate dehydrogenase activity, and thereby regulates metabolite flux through the tricarboxylic acid cycle, down-regulates aerobic respiration and inhibits the formation of acetyl-coenzyme A from pyruvate. Inhibition of pyruvate dehydrogenase decreases glucose utilization and increases fat metabolism. Mediates cellular responses to insulin. Plays an important role in maintaining normal blood glucose levels and in metabolic adaptation to nutrient availability. Via its regulation of pyruvate dehydrogenase activity, plays an important role in maintaining normal blood pH and in preventing the accumulation of ketone bodies under starvation. Plays a role in the regulation of cell proliferation and in resistance to apoptosis under oxidative stress. Plays a role in p53/TP53-mediated apoptosis. This is [Pyruvate dehydrogenase (acetyl-transferring)] kinase isozyme 2, mitochondrial (Pdk2) from Rattus norvegicus (Rat).